The following is a 737-amino-acid chain: Probable beta-glucosidase L (737 aa).

An N-terminal signal peptide occupies residues 1 to 19 (MRSLIRSGALNAFLAASLA). N-linked (GlcNAc...) asparagine glycosylation occurs at asparagine 225. Aspartate 253 is a catalytic residue. Asparagine 340, asparagine 365, and asparagine 608 each carry an N-linked (GlcNAc...) asparagine glycan.

The protein belongs to the glycosyl hydrolase 3 family.

The protein localises to the secreted. It catalyses the reaction Hydrolysis of terminal, non-reducing beta-D-glucosyl residues with release of beta-D-glucose.. Its pathway is glycan metabolism; cellulose degradation. Beta-glucosidases are one of a number of cellulolytic enzymes involved in the degradation of cellulosic biomass. Catalyzes the last step releasing glucose from the inhibitory cellobiose. The sequence is that of Probable beta-glucosidase L (bglL) from Emericella nidulans (strain FGSC A4 / ATCC 38163 / CBS 112.46 / NRRL 194 / M139) (Aspergillus nidulans).